Here is a 480-residue protein sequence, read N- to C-terminus: CASP8 and FADD-like apoptosis regulator (480 aa).

2 consecutive DED domains span residues 1–73 (MSAE…RILK) and 92–170 (DYRV…KIQK). The interaction with CASP8 stretch occupies residues 1-195 (MSAEVIHQVE…LQAAIQKSFK (195 aa)). Residues 1–227 (MSAEVIHQVE…GTQQEPVKKS (227 aa)) form an interaction with FADD region. Residues 1–305 (MSAEVIHQVE…FACMPEHRDY (305 aa)) are interaction with CASP8 propeptide. The tract at residues 1 to 435 (MSAEVIHQVE…CLSQKLRQER (435 aa)) is not proteolytically processed and involved in apoptosis inhibition. The interaction with CASP3 stretch occupies residues 192-435 (KSFKDPSNNF…CLSQKLRQER (244 aa)). The interaction with TRAF1 and TRAF2 stretch occupies residues 192-480 (KSFKDPSNNF…LRKKLIPSYT (289 aa)). The interval 217–480 (LGTQQEPVKK…LRKKLIPSYT (264 aa)) is interaction with CASP8 subunits p18 and p10. The interval 263–358 (ETELLRDTFT…AGKPKIFFIQ (96 aa)) is caspase. The interval 370-480 (SSLLEVDGPA…LRKKLIPSYT (111 aa)) is interaction with CASP8.

Belongs to the peptidase C14A family. In terms of assembly, TNFRSF6 stimulation triggers recruitment to the death-inducing signaling complex (DISC) formed by TNFRSF6, FADD and CASP8. A proteolytic fragment (p43) stays associated with the DISC. Interacts with RIPK1. In terms of processing, proteolytically processed by CASP8 generating subunit p43 and p12.

Apoptosis regulator protein which may function as a crucial link between cell survival and cell death pathways in mammalian cells. Acts as an inhibitor of TNFRSF6 mediated apoptosis. A proteolytic fragment (p43) is likely retained in the death-inducing signaling complex (DISC) thereby blocking further recruitment and processing of caspase-8 at the complex. Full length and shorter isoforms have been shown either to induce apoptosis or to reduce TNFRSF-triggered apoptosis. Lacks enzymatic (caspase) activity. This Pongo abelii (Sumatran orangutan) protein is CASP8 and FADD-like apoptosis regulator (CFLAR).